We begin with the raw amino-acid sequence, 162 residues long: MKSKILCNLFKGKSCICLYTNCLNENNVNKCYYNLVRNYSDHVKDHFNKPRNVGSFDKNEKNIGTSIVGKASCGDVIKLQLKIENDVIKDARFMAFGCGSAIASSSYATELIKGKTIDEALKIKNNDIASHLSLPPVKIHCSLLAEDAIKHAIKNYREKVLT.

The protein belongs to the NifU family. As to quaternary structure, homotrimer. Small proportion is monomeric. Interacts with IscS. Interacts with ABCB6. Component of a complex, at least composed of IscS, Isd11 and IscU. Requires [4Fe-4S] cluster as cofactor.

It is found in the mitochondrion. Its pathway is cofactor biosynthesis; iron-sulfur cluster biosynthesis. In terms of biological role, participates in iron-sulfur cluster formation (ISC) pathway for iron-sulfur (Fe-S) cluster biogenesis. Plays a role of a major scaffold protein for [Fe-S] assembly; assembles [4Fe-4S] clusters directly upon interaction with the catalytic component IscS-Isd11 as part of the scaffold complex. Can transfer [4Fe-4S] clusters to target apo-proteins. This chain is Iron-sulfur cluster assembly protein IscU, found in Plasmodium falciparum (isolate 3D7).